A 185-amino-acid polypeptide reads, in one-letter code: Probable RNA 2'-phosphotransferase (185 aa).

The protein belongs to the KptA/TPT1 family.

Its function is as follows. Removes the 2'-phosphate from RNA via an intermediate in which the phosphate is ADP-ribosylated by NAD followed by a presumed transesterification to release the RNA and generate ADP-ribose 1''-2''-cyclic phosphate (APPR&gt;P). May function as an ADP-ribosylase. The chain is Probable RNA 2'-phosphotransferase from Rhizobium rhizogenes (strain K84 / ATCC BAA-868) (Agrobacterium radiobacter).